The primary structure comprises 202 residues: Glycerol-3-phosphate acyltransferase (202 aa).

Transmembrane regions (helical) follow at residues 3-23 (ILLA…VVVS), 51-71 (KAAI…VWLV), 74-94 (FGIG…LGHL), 116-136 (AVHP…AFFF), and 140-160 (SLAA…LFGT).

This sequence belongs to the PlsY family. As to quaternary structure, probably interacts with PlsX.

Its subcellular location is the cell inner membrane. The catalysed reaction is an acyl phosphate + sn-glycerol 3-phosphate = a 1-acyl-sn-glycero-3-phosphate + phosphate. It functions in the pathway lipid metabolism; phospholipid metabolism. In terms of biological role, catalyzes the transfer of an acyl group from acyl-phosphate (acyl-PO(4)) to glycerol-3-phosphate (G3P) to form lysophosphatidic acid (LPA). This enzyme utilizes acyl-phosphate as fatty acyl donor, but not acyl-CoA or acyl-ACP. This is Glycerol-3-phosphate acyltransferase from Burkholderia thailandensis (strain ATCC 700388 / DSM 13276 / CCUG 48851 / CIP 106301 / E264).